A 148-amino-acid polypeptide reads, in one-letter code: Holo-[acyl-carrier-protein] synthase (148 aa).

Residues D8 and E57 each coordinate Mg(2+).

This sequence belongs to the P-Pant transferase superfamily. AcpS family. It depends on Mg(2+) as a cofactor.

It is found in the cytoplasm. It carries out the reaction apo-[ACP] + CoA = holo-[ACP] + adenosine 3',5'-bisphosphate + H(+). Its function is as follows. Transfers the 4'-phosphopantetheine moiety from coenzyme A to a Ser of acyl-carrier-protein. The polypeptide is Holo-[acyl-carrier-protein] synthase (Ruegeria pomeroyi (strain ATCC 700808 / DSM 15171 / DSS-3) (Silicibacter pomeroyi)).